The chain runs to 191 residues: UPF0312 protein SO_3370 (191 aa).

An N-terminal signal peptide occupies residues 1 to 22 (MKKQLFSALIGASLFAPMAVSA).

This sequence belongs to the UPF0312 family. Type 1 subfamily.

It localises to the periplasm. This Shewanella oneidensis (strain ATCC 700550 / JCM 31522 / CIP 106686 / LMG 19005 / NCIMB 14063 / MR-1) protein is UPF0312 protein SO_3370.